The primary structure comprises 90 residues: UPF0335 protein Smed_2680 (90 aa).

Belongs to the UPF0335 family.

The chain is UPF0335 protein Smed_2680 from Sinorhizobium medicae (strain WSM419) (Ensifer medicae).